The sequence spans 744 residues: Adenosylcobalamin-dependent ribonucleoside-triphosphate reductase (744 aa).

An intrachain disulfide couples cysteine 120 to cysteine 424. The segment at 148-159 is effector region-1; the sequence is SMPFSFLFDQLM. The tract at residues 169–318 is effector region-2; it reads VNSNIKQIPK…ICNLIGKTVV (150 aa). Residues cysteine 413 and glutamate 415 contribute to the active site. Residues 570-631 are adenosylcobalamin-binding-1; that stretch reads FHYAGYLIQR…SKNFASAGTV (62 aa). The tract at residues 690-729 is adenosylcobalamin-binding-2; sequence LKQAPKEPINKKTYEERAALITDDVEEVFTKQNDDQKGLE.

The protein belongs to the class II ribonucleoside-triphosphate reductase family. Monomer. Adenosylcob(III)alamin serves as cofactor.

It carries out the reaction a 2'-deoxyribonucleoside 5'-triphosphate + [thioredoxin]-disulfide + H2O = a ribonucleoside 5'-triphosphate + [thioredoxin]-dithiol. Its activity is regulated as follows. Allosterically regulated by ATP and dNTP. The chain is Adenosylcobalamin-dependent ribonucleoside-triphosphate reductase (rtpR) from Lactobacillus acidophilus (strain ATCC 700396 / NCK56 / N2 / NCFM).